We begin with the raw amino-acid sequence, 385 residues long: 1-deoxy-D-xylulose 5-phosphate reductoisomerase (385 aa).

Thr13, Gly14, Ser15, Ile16, Asn40, and Asn122 together coordinate NADPH. Lys123 contributes to the 1-deoxy-D-xylulose 5-phosphate binding site. Glu124 lines the NADPH pocket. Asp148 contributes to the Mn(2+) binding site. The 1-deoxy-D-xylulose 5-phosphate site is built by Ser149, Glu150, Ser177, and His200. Glu150 is a binding site for Mn(2+). Gly206 serves as a coordination point for NADPH. Positions 213, 218, 219, and 222 each coordinate 1-deoxy-D-xylulose 5-phosphate. Glu222 is a Mn(2+) binding site.

It belongs to the DXR family. It depends on Mg(2+) as a cofactor. The cofactor is Mn(2+).

It carries out the reaction 2-C-methyl-D-erythritol 4-phosphate + NADP(+) = 1-deoxy-D-xylulose 5-phosphate + NADPH + H(+). It participates in isoprenoid biosynthesis; isopentenyl diphosphate biosynthesis via DXP pathway; isopentenyl diphosphate from 1-deoxy-D-xylulose 5-phosphate: step 1/6. Its function is as follows. Catalyzes the NADPH-dependent rearrangement and reduction of 1-deoxy-D-xylulose-5-phosphate (DXP) to 2-C-methyl-D-erythritol 4-phosphate (MEP). The chain is 1-deoxy-D-xylulose 5-phosphate reductoisomerase from Francisella tularensis subsp. holarctica (strain FTNF002-00 / FTA).